The following is a 194-amino-acid chain: Crossover junction endodeoxyribonuclease RuvC (194 aa).

Residues D8, E72, and D144 contribute to the active site. D8, E72, and D144 together coordinate Mg(2+).

This sequence belongs to the RuvC family. Homodimer which binds Holliday junction (HJ) DNA. The HJ becomes 2-fold symmetrical on binding to RuvC with unstacked arms; it has a different conformation from HJ DNA in complex with RuvA. In the full resolvosome a probable DNA-RuvA(4)-RuvB(12)-RuvC(2) complex forms which resolves the HJ. The cofactor is Mg(2+).

Its subcellular location is the cytoplasm. The enzyme catalyses Endonucleolytic cleavage at a junction such as a reciprocal single-stranded crossover between two homologous DNA duplexes (Holliday junction).. Functionally, the RuvA-RuvB-RuvC complex processes Holliday junction (HJ) DNA during genetic recombination and DNA repair. Endonuclease that resolves HJ intermediates. Cleaves cruciform DNA by making single-stranded nicks across the HJ at symmetrical positions within the homologous arms, yielding a 5'-phosphate and a 3'-hydroxyl group; requires a central core of homology in the junction. The consensus cleavage sequence is 5'-(A/T)TT(C/G)-3'. Cleavage occurs on the 3'-side of the TT dinucleotide at the point of strand exchange. HJ branch migration catalyzed by RuvA-RuvB allows RuvC to scan DNA until it finds its consensus sequence, where it cleaves and resolves the cruciform DNA. This Psychrobacter cryohalolentis (strain ATCC BAA-1226 / DSM 17306 / VKM B-2378 / K5) protein is Crossover junction endodeoxyribonuclease RuvC.